Here is a 642-residue protein sequence, read N- to C-terminus: DNA primase (642 aa).

Residues C41–C65 form a CHC2-type zinc finger. The Toprim domain occupies H262–A348. Residues E268, D319, and D321 each contribute to the Mg(2+) site. The segment at N445–P480 is disordered.

This sequence belongs to the DnaG primase family. As to quaternary structure, monomer. Interacts with DnaB. It depends on Zn(2+) as a cofactor. Mg(2+) is required as a cofactor.

It carries out the reaction ssDNA + n NTP = ssDNA/pppN(pN)n-1 hybrid + (n-1) diphosphate.. RNA polymerase that catalyzes the synthesis of short RNA molecules used as primers for DNA polymerase during DNA replication. The protein is DNA primase of Mycobacterium leprae (strain TN).